We begin with the raw amino-acid sequence, 632 residues long: 1-deoxy-D-xylulose-5-phosphate synthase (632 aa).

Thiamine diphosphate-binding positions include His79 and 120–122 (GHA). Residue Asp151 participates in Mg(2+) binding. Thiamine diphosphate-binding positions include 152-153 (GS), Asn180, Phe292, and Glu376. Asn180 contacts Mg(2+).

The protein belongs to the transketolase family. DXPS subfamily. As to quaternary structure, homodimer. The cofactor is Mg(2+). Thiamine diphosphate serves as cofactor.

It carries out the reaction D-glyceraldehyde 3-phosphate + pyruvate + H(+) = 1-deoxy-D-xylulose 5-phosphate + CO2. The protein operates within metabolic intermediate biosynthesis; 1-deoxy-D-xylulose 5-phosphate biosynthesis; 1-deoxy-D-xylulose 5-phosphate from D-glyceraldehyde 3-phosphate and pyruvate: step 1/1. In terms of biological role, catalyzes the acyloin condensation reaction between C atoms 2 and 3 of pyruvate and glyceraldehyde 3-phosphate to yield 1-deoxy-D-xylulose-5-phosphate (DXP). The protein is 1-deoxy-D-xylulose-5-phosphate synthase of Azobacteroides pseudotrichonymphae genomovar. CFP2.